Here is a 181-residue protein sequence, read N- to C-terminus: Oligoribonuclease (181 aa).

The Exonuclease domain occupies 8–171 (LIWVDLEMTG…DDIRESIAEL (164 aa)). Tyr-129 is an active-site residue.

This sequence belongs to the oligoribonuclease family.

The protein resides in the cytoplasm. In terms of biological role, 3'-to-5' exoribonuclease specific for small oligoribonucleotides. In Vibrio parahaemolyticus serotype O3:K6 (strain RIMD 2210633), this protein is Oligoribonuclease.